The following is a 412-amino-acid chain: MTSLTNAVFKRYLAVTPSAHQALKTRIKKKSSSFDKFFPQQSNSRKKQWETLNEDKASWFKRKYAHVHAREQDRAADPYGKKKAHVEKLKEIKNQAKLNQKSHKSKFQNKDIALKLMNDNPIFEYVYGTNSVYAALLNPSRNCHSRLLYHGTIPSKFLQIVDELKVTTELVDKHRLNLLTNYGVHNNIALETKPLQPVEIAYLGDMDTSSAALSIHELGFNNENIPHELPYGTKTDAKKFPLGLYLDEITDPHNIGAIIRSAYFLGVDFIVMSRRNCSPLTPVVSKTSSGALELLPIFYVDKPLEFFTKSQEMGGWTFITSHLANATSEKYTVGKTISMHDLNGLCNELPVVLVVGNESQGVRTNLKMRSDFFVEIPFGGIEKGNRAPEPIVDSLNVSVATALLIDNILTCK.

The N-terminal 20 residues, 1–20 (MTSLTNAVFKRYLAVTPSAH), are a transit peptide targeting the mitochondrion.

It belongs to the class IV-like SAM-binding methyltransferase superfamily. RNA methyltransferase TrmH family.

The protein resides in the mitochondrion. It carries out the reaction guanosine(2270) in 21S rRNA + S-adenosyl-L-methionine = 2'-O-methylguanosine(2270) in 21S rRNA + S-adenosyl-L-homocysteine + H(+). S-adenosyl-L-methionine-dependent 2'-O-ribose methyltransferase that catalyzes the formation of 2'-O-methylguanosine at position 2270 (Gm2270) in the 21S mitochondrial large subunit ribosomal RNA (mtLSU rRNA), a universally conserved modification in the peptidyl transferase domain of the mtLSU rRNA. This modification seems to be important for the normal accumulation of the mitochondrial large ribosomal subunit. The sequence is that of rRNA methyltransferase 1, mitochondrial from Saccharomyces cerevisiae (strain ATCC 204508 / S288c) (Baker's yeast).